Reading from the N-terminus, the 674-residue chain is E3 ubiquitin ligase Rnf157 (674 aa).

The segment at 277–316 (CVVCLSDVRDTLILPCRHLCLCNACADTLRYQASNCPICR) adopts an RING-type zinc-finger fold. Disordered stretches follow at residues 376-404 (LTPS…GSDI) and 433-610 (QNSS…TGRE). Positions 469-508 (TPESENLTLSSSGAIDQSSCTGTPLSPTISSPEDPLSSSL) are enriched in polar residues. Residues 509 to 526 (AQSIMSMASSHSQQSQLS) show a composition bias toward low complexity. Polar residues predominate over residues 527-537 (TDTVSSMSGSY). Over residues 583-604 (EEMDAEGNVTEEEFASPEEDDG) the composition is skewed to acidic residues.

The protein localises to the cytoplasm. It carries out the reaction S-ubiquitinyl-[E2 ubiquitin-conjugating enzyme]-L-cysteine + [acceptor protein]-L-lysine = [E2 ubiquitin-conjugating enzyme]-L-cysteine + N(6)-ubiquitinyl-[acceptor protein]-L-lysine.. E3 ubiquitin ligase that ubiquitinates apbb1 for its degradation by the proteasome and thus prevents apoptosis and promotes survival of neurons. Has a dual role in neurons as it is also required for dendrite growth and maintenance for which its ligase activity is not critical. May act as a scaffold molecule to regulate this process. Acts as a downstream effector of the interconnected PI3K and MAPK signaling pathways and thus participates in the regulation of the cell cycle. The polypeptide is E3 ubiquitin ligase Rnf157 (rnf157) (Xenopus laevis (African clawed frog)).